Reading from the N-terminus, the 722-residue chain is Dynein axonemal intermediate chain 7 (722 aa).

Residues 1–15 (MGPKAKKSGSKKKKV) show a composition bias toward basic residues. The tract at residues 1–20 (MGPKAKKSGSKKKKVTKAER) is disordered.

The protein belongs to the DNAI7 family. As to quaternary structure, part of the multisubunit axonemal dynein complex formed at least of two heavy chains and a number of intermediate and light chains. Associates with tubulin. Interacts with microtubule. Post-translationally, ubiquitinated. Ubiquitination leads to its degradation through the 26S proteasome. Ubiquitin-proteasome-mediated DNAI7 degradation occurs in mitosis.

Its subcellular location is the cell projection. It localises to the cilium. It is found in the cytoplasm. Via its association with the multisubunit axonemal dynein complex, is potentially involved in the regulation of cilia function. May act as a cell cycle regulator. The protein is Dynein axonemal intermediate chain 7 of Macaca fascicularis (Crab-eating macaque).